The chain runs to 358 residues: Uroporphyrinogen decarboxylase (358 aa).

Substrate is bound by residues 29–33 (RQAGR), Phe48, Asp79, Tyr155, Ser210, and His330.

Belongs to the uroporphyrinogen decarboxylase family. Homodimer.

It localises to the cytoplasm. It catalyses the reaction uroporphyrinogen III + 4 H(+) = coproporphyrinogen III + 4 CO2. It functions in the pathway porphyrin-containing compound metabolism; protoporphyrin-IX biosynthesis; coproporphyrinogen-III from 5-aminolevulinate: step 4/4. Its function is as follows. Catalyzes the decarboxylation of four acetate groups of uroporphyrinogen-III to yield coproporphyrinogen-III. The polypeptide is Uroporphyrinogen decarboxylase (Bordetella bronchiseptica (strain ATCC BAA-588 / NCTC 13252 / RB50) (Alcaligenes bronchisepticus)).